Consider the following 372-residue polypeptide: Glutamate 5-kinase (372 aa).

Lys-14 contributes to the ATP binding site. Residues Ser-54, Asp-141, and Asn-153 each contribute to the substrate site. 173 to 174 (TD) contributes to the ATP binding site. The PUA domain maps to 280 to 358 (RGHVVIDDGA…GEIESVLGYM (79 aa)).

It belongs to the glutamate 5-kinase family.

The protein localises to the cytoplasm. The enzyme catalyses L-glutamate + ATP = L-glutamyl 5-phosphate + ADP. It functions in the pathway amino-acid biosynthesis; L-proline biosynthesis; L-glutamate 5-semialdehyde from L-glutamate: step 1/2. Functionally, catalyzes the transfer of a phosphate group to glutamate to form L-glutamate 5-phosphate. The protein is Glutamate 5-kinase of Paraburkholderia xenovorans (strain LB400).